Reading from the N-terminus, the 206-residue chain is uncharacterized protein (206 aa).

An N-terminal signal peptide occupies residues 1-18 (MSSLVLIPCALLTQGIYA).

This is an uncharacterized protein from Acanthamoeba polyphaga mimivirus (APMV).